Consider the following 474-residue polypeptide: Probable dipeptidase B (474 aa).

C11 is a catalytic residue.

The protein belongs to the peptidase C69 family.

It catalyses the reaction an L-aminoacyl-L-amino acid + H2O = 2 an L-alpha-amino acid. The chain is Probable dipeptidase B (pepDB) from Lactococcus lactis subsp. lactis (strain IL1403) (Streptococcus lactis).